We begin with the raw amino-acid sequence, 127 residues long: MKEIIYIFIGGGMGSVTRYLTQIAVNERLSPALFPFPWGTFAVNIIGSLLIGFFYSFSERFNLSFELRLFLTVGFCGGFTTFSTLANDSLSLLKGGFYGIFTFYVFISILLGLLAVLAGGYLGEQFK.

A run of 4 helical transmembrane segments spans residues 4–24 (IIYI…TQIA), 34–54 (FPFP…IGFF), 65–85 (FELR…FSTL), and 97–117 (FYGI…LAVL). Na(+) contacts are provided by glycine 77 and threonine 80.

Belongs to the fluoride channel Fluc/FEX (TC 1.A.43) family.

The protein localises to the cell inner membrane. It catalyses the reaction fluoride(in) = fluoride(out). Na(+) is not transported, but it plays an essential structural role and its presence is essential for fluoride channel function. Fluoride-specific ion channel. Important for reducing fluoride concentration in the cell, thus reducing its toxicity. In Bacteroides fragilis (strain ATCC 25285 / DSM 2151 / CCUG 4856 / JCM 11019 / LMG 10263 / NCTC 9343 / Onslow / VPI 2553 / EN-2), this protein is Fluoride-specific ion channel FluC.